We begin with the raw amino-acid sequence, 172 residues long: Signal peptidase complex catalytic subunit SEC11 (172 aa).

The Cytoplasmic segment spans residues 1 to 14 (MLSSLGNPRQAATQ). Residues 15 to 35 (LLNFALILSTAFMMWKGLSVA) form a helical; Signal-anchor for type II membrane protein membrane-spanning segment. At 36 to 172 (TDSPSPIVVV…MGLMVVLQRE (137 aa)) the chain is on the lumenal side. Residues Ser-49, His-90, and Asp-115 each act as charge relay system in the active site. The segment at 158–169 (AMLGIMGLMVVL) is C-terminal short (CTS) helix.

Belongs to the peptidase S26B family. In terms of assembly, component of the signal peptidase complex (SPC) composed of a catalytic subunit SEC11 and three accessory subunits SPC1, SPC2 and SPC3. The complex induces a local thinning of the ER membrane which is used to measure the length of the signal peptide (SP) h-region of protein substrates. This ensures the selectivity of the complex towards h-regions shorter than 18-20 amino acids. SPC associates with the translocon complex.

The protein localises to the endoplasmic reticulum membrane. The enzyme catalyses Cleavage of hydrophobic, N-terminal signal or leader sequences from secreted and periplasmic proteins.. Catalytic component of the signal peptidase complex (SPC) which catalyzes the cleavage of N-terminal signal sequences from nascent proteins as they are translocated into the lumen of the endoplasmic reticulum. Specifically cleaves N-terminal signal peptides that contain a hydrophobic alpha-helix (h-region) shorter than 18-20 amino acids. This is Signal peptidase complex catalytic subunit SEC11 (SEC11) from Pyricularia oryzae (strain 70-15 / ATCC MYA-4617 / FGSC 8958) (Rice blast fungus).